A 127-amino-acid polypeptide reads, in one-letter code: Large ribosomal subunit protein bL20 (127 aa).

Belongs to the bacterial ribosomal protein bL20 family.

Functionally, binds directly to 23S ribosomal RNA and is necessary for the in vitro assembly process of the 50S ribosomal subunit. It is not involved in the protein synthesizing functions of that subunit. This Corynebacterium diphtheriae (strain ATCC 700971 / NCTC 13129 / Biotype gravis) protein is Large ribosomal subunit protein bL20.